The primary structure comprises 311 residues: tRNA-cytidine(32) 2-sulfurtransferase (311 aa).

A PP-loop motif motif is present at residues 47–52 (SGGKDS). Residues Cys122, Cys125, and Cys213 each coordinate [4Fe-4S] cluster.

This sequence belongs to the TtcA family. As to quaternary structure, homodimer. The cofactor is Mg(2+). Requires [4Fe-4S] cluster as cofactor.

Its subcellular location is the cytoplasm. The catalysed reaction is cytidine(32) in tRNA + S-sulfanyl-L-cysteinyl-[cysteine desulfurase] + AH2 + ATP = 2-thiocytidine(32) in tRNA + L-cysteinyl-[cysteine desulfurase] + A + AMP + diphosphate + H(+). Its pathway is tRNA modification. Catalyzes the ATP-dependent 2-thiolation of cytidine in position 32 of tRNA, to form 2-thiocytidine (s(2)C32). The sulfur atoms are provided by the cysteine/cysteine desulfurase (IscS) system. The protein is tRNA-cytidine(32) 2-sulfurtransferase of Pectobacterium atrosepticum (strain SCRI 1043 / ATCC BAA-672) (Erwinia carotovora subsp. atroseptica).